Reading from the N-terminus, the 275-residue chain is MQQMTIFVISDSSGETALTVAQTAVSQYPTIQVSYQRFPFIQTDSILDGILNLAKKQRAMIFHTLVSPKLSQHVREFAAMNHLQQFDCIQPAMDVMHQATGLEPEGVPGLVHNLNDTYFDRIAAMEFAVTYDDGKDPTGLLKADIVILGVSRTSKTPLSLFLANRNLRVANLPLSPKTQLPDELWQVDPKRIFGLTNRPEILRKIRQERMLSYGLPADSAYSDTAKITEELAYAQKLYKKIGCLVIDVSNKSIEETATLIMESVDYDLIPHSLQD.

ADP is bound at residue 149 to 156 (GVSRTSKT).

This sequence belongs to the pyruvate, phosphate/water dikinase regulatory protein family. PDRP subfamily.

It catalyses the reaction N(tele)-phospho-L-histidyl/L-threonyl-[pyruvate, phosphate dikinase] + ADP = N(tele)-phospho-L-histidyl/O-phospho-L-threonyl-[pyruvate, phosphate dikinase] + AMP + H(+). It carries out the reaction N(tele)-phospho-L-histidyl/O-phospho-L-threonyl-[pyruvate, phosphate dikinase] + phosphate + H(+) = N(tele)-phospho-L-histidyl/L-threonyl-[pyruvate, phosphate dikinase] + diphosphate. In terms of biological role, bifunctional serine/threonine kinase and phosphorylase involved in the regulation of the pyruvate, phosphate dikinase (PPDK) by catalyzing its phosphorylation/dephosphorylation. This chain is Putative pyruvate, phosphate dikinase regulatory protein, found in Levilactobacillus brevis (strain ATCC 367 / BCRC 12310 / CIP 105137 / JCM 1170 / LMG 11437 / NCIMB 947 / NCTC 947) (Lactobacillus brevis).